Here is a 221-residue protein sequence, read N- to C-terminus: 7-cyano-7-deazaguanine synthase (221 aa).

ATP is bound at residue 10-20 (FSGGQDSTTCL). Residues Cys187, Cys196, Cys199, and Cys202 each contribute to the Zn(2+) site.

Belongs to the QueC family. As to quaternary structure, homodimer. Zn(2+) is required as a cofactor.

The catalysed reaction is 7-carboxy-7-deazaguanine + NH4(+) + ATP = 7-cyano-7-deazaguanine + ADP + phosphate + H2O + H(+). It functions in the pathway purine metabolism; 7-cyano-7-deazaguanine biosynthesis. In terms of biological role, catalyzes the ATP-dependent conversion of 7-carboxy-7-deazaguanine (CDG) to 7-cyano-7-deazaguanine (preQ(0)). In Shouchella clausii (strain KSM-K16) (Alkalihalobacillus clausii), this protein is 7-cyano-7-deazaguanine synthase.